A 176-amino-acid chain; its full sequence is Large ribosomal subunit protein eL6 (176 aa).

Positions 1 to 27 (MSQVAPKWYQSEDVPAPKQTRKTARPQ) are disordered.

The protein belongs to the eukaryotic ribosomal protein eL6 family. As to quaternary structure, component of the large ribosomal subunit. Mature ribosomes consist of a small (40S) and a large (60S) subunit. The 40S subunit contains about 32 different proteins and 1 molecule of RNA (18S). The 60S subunit contains 45 different proteins and 3 molecules of RNA (25S, 5.8S and 5S).

The protein resides in the cytoplasm. Component of the ribosome, a large ribonucleoprotein complex responsible for the synthesis of proteins in the cell. The small ribosomal subunit (SSU) binds messenger RNAs (mRNAs) and translates the encoded message by selecting cognate aminoacyl-transfer RNA (tRNA) molecules. The large subunit (LSU) contains the ribosomal catalytic site termed the peptidyl transferase center (PTC), which catalyzes the formation of peptide bonds, thereby polymerizing the amino acids delivered by tRNAs into a polypeptide chain. The nascent polypeptides leave the ribosome through a tunnel in the LSU and interact with protein factors that function in enzymatic processing, targeting, and the membrane insertion of nascent chains at the exit of the ribosomal tunnel. The polypeptide is Large ribosomal subunit protein eL6 (Candida albicans (strain SC5314 / ATCC MYA-2876) (Yeast)).